We begin with the raw amino-acid sequence, 281 residues long: Pantothenate synthetase (281 aa).

17 to 24 is an ATP binding site; sequence MGFLHEGH. H24 serves as the catalytic Proton donor. Q48 is a binding site for (R)-pantoate. Q48 serves as a coordination point for beta-alanine. ATP is bound at residue 134–137; sequence GEKD. Position 140 (Q140) interacts with (R)-pantoate. Residues V163 and 176–179 each bind ATP; that span reads LSSR.

Belongs to the pantothenate synthetase family. In terms of assembly, homodimer.

It localises to the cytoplasm. It carries out the reaction (R)-pantoate + beta-alanine + ATP = (R)-pantothenate + AMP + diphosphate + H(+). The protein operates within cofactor biosynthesis; (R)-pantothenate biosynthesis; (R)-pantothenate from (R)-pantoate and beta-alanine: step 1/1. Functionally, catalyzes the condensation of pantoate with beta-alanine in an ATP-dependent reaction via a pantoyl-adenylate intermediate. In Deinococcus radiodurans (strain ATCC 13939 / DSM 20539 / JCM 16871 / CCUG 27074 / LMG 4051 / NBRC 15346 / NCIMB 9279 / VKM B-1422 / R1), this protein is Pantothenate synthetase.